Reading from the N-terminus, the 343-residue chain is Dihydroorotase (343 aa).

2 residues coordinate Zn(2+): H14 and H16. Residues 16-18 (HVR) and N42 contribute to the substrate site. K98, H135, and H173 together coordinate Zn(2+). An N6-carboxylysine modification is found at K98. Residue H135 coordinates substrate. A substrate-binding site is contributed by L219. D247 is a binding site for Zn(2+). The active site involves D247. H251 and A263 together coordinate substrate.

Belongs to the metallo-dependent hydrolases superfamily. DHOase family. Class II DHOase subfamily. As to quaternary structure, homodimer. The cofactor is Zn(2+).

It catalyses the reaction (S)-dihydroorotate + H2O = N-carbamoyl-L-aspartate + H(+). It functions in the pathway pyrimidine metabolism; UMP biosynthesis via de novo pathway; (S)-dihydroorotate from bicarbonate: step 3/3. In terms of biological role, catalyzes the reversible cyclization of carbamoyl aspartate to dihydroorotate. In Marinobacter nauticus (strain ATCC 700491 / DSM 11845 / VT8) (Marinobacter aquaeolei), this protein is Dihydroorotase.